The sequence spans 425 residues: Serine--tRNA ligase (425 aa).

228–230 (TAE) contributes to the L-serine binding site. Residue 259–261 (RSE) participates in ATP binding. Glu-282 serves as a coordination point for L-serine. 346-349 (EIAS) contacts ATP. Position 382 (Ser-382) interacts with L-serine.

This sequence belongs to the class-II aminoacyl-tRNA synthetase family. Type-1 seryl-tRNA synthetase subfamily. In terms of assembly, homodimer. The tRNA molecule binds across the dimer.

It localises to the cytoplasm. The catalysed reaction is tRNA(Ser) + L-serine + ATP = L-seryl-tRNA(Ser) + AMP + diphosphate + H(+). It carries out the reaction tRNA(Sec) + L-serine + ATP = L-seryl-tRNA(Sec) + AMP + diphosphate + H(+). It functions in the pathway aminoacyl-tRNA biosynthesis; selenocysteinyl-tRNA(Sec) biosynthesis; L-seryl-tRNA(Sec) from L-serine and tRNA(Sec): step 1/1. In terms of biological role, catalyzes the attachment of serine to tRNA(Ser). Is also able to aminoacylate tRNA(Sec) with serine, to form the misacylated tRNA L-seryl-tRNA(Sec), which will be further converted into selenocysteinyl-tRNA(Sec). This Rickettsia rickettsii (strain Iowa) protein is Serine--tRNA ligase.